Consider the following 137-residue polypeptide: Histone H2B (137 aa).

Residues 1 to 10 are compositionally biased toward basic and acidic residues; it reads MAPKAADKKP. Residues 1–46 form a disordered region; it reads MAPKAADKKPASKAPATASKAPEKKDAGKKTAASGDKKKRSKSRKE. N6-acetyllysine; alternate is present on residues K8 and K9. Residues K8 and K9 each participate in a glycyl lysine isopeptide (Lys-Gly) (interchain with G-Cter in SUMO); alternate cross-link. Phosphoserine is present on S12. The residue at position 13 (K13) is an N6-acetyllysine. The residue at position 24 (K24) is an N6-acetyllysine; alternate. Residue K24 forms a Glycyl lysine isopeptide (Lys-Gly) (interchain with G-Cter in SUMO); alternate linkage. K25 participates in a covalent cross-link: Glycyl lysine isopeptide (Lys-Gly) (interchain with G-Cter in SUMO). A Glycyl lysine isopeptide (Lys-Gly) (interchain with G-Cter in ubiquitin) cross-link involves residue K131.

This sequence belongs to the histone H2B family. As to quaternary structure, the nucleosome is a histone octamer containing two molecules each of H2A, H2B, H3 and H4 assembled in one H3-H4 heterotetramer and two H2A-H2B heterodimers. The octamer wraps approximately 147 bp of DNA. Post-translationally, monoubiquitinated by the UBC2-BRE1 complex to form H2BK123ub1. H2BK123ub1 gives a specific tag for epigenetic transcriptional activation and is also prerequisite for H3K4me and H3K79me formation. H2BK123ub1 also modulates the formation of double-strand breaks during meiosis and is a prerequisite for DNA-damage checkpoint activation. Phosphorylated to form H2BS10ph during progression through meiotic prophase. May be correlated with chromosome condensation. In terms of processing, acetylated by GCN5 to form H2BK11ac and H2BK16ac. H2BK16ac can also be formed by ESA1. Acetylation of N-terminal lysines and particularly formation of H2BK11acK16ac has a positive effect on transcription. Post-translationally, sumoylation to form H2BK6su or H2BK7su, and probably also H2BK16su or H2BK17su, occurs preferentially near the telomeres and represses gene transcription.

The protein localises to the nucleus. Its subcellular location is the chromosome. Its function is as follows. Core component of nucleosome. Nucleosomes wrap and compact DNA into chromatin, limiting DNA accessibility to the cellular machineries which require DNA as a template. Histones thereby play a central role in transcription regulation, DNA repair, DNA replication and chromosomal stability. DNA accessibility is regulated via a complex set of post-translational modifications of histones, also called histone code, and nucleosome remodeling. The chain is Histone H2B (HTB1) from Gibberella zeae (strain ATCC MYA-4620 / CBS 123657 / FGSC 9075 / NRRL 31084 / PH-1) (Wheat head blight fungus).